Consider the following 430-residue polypeptide: Adenylosuccinate synthetase (430 aa).

GTP is bound by residues Gly-11–Lys-17 and Gly-39–Ser-41. Asp-12 functions as the Proton acceptor in the catalytic mechanism. Positions 12 and 39 each coordinate Mg(2+). Residues Asp-12 to Lys-15, Asn-37 to His-40, Thr-129, Arg-143, Asn-221, Thr-236, and Arg-300 contribute to the IMP site. Catalysis depends on His-40, which acts as the Proton donor. Val-296–Arg-302 lines the substrate pocket. Residues Arg-302, Lys-328 to Asp-330, and Gly-412 to Gly-414 contribute to the GTP site.

This sequence belongs to the adenylosuccinate synthetase family. As to quaternary structure, homodimer. It depends on Mg(2+) as a cofactor.

The protein localises to the cytoplasm. The catalysed reaction is IMP + L-aspartate + GTP = N(6)-(1,2-dicarboxyethyl)-AMP + GDP + phosphate + 2 H(+). Its pathway is purine metabolism; AMP biosynthesis via de novo pathway; AMP from IMP: step 1/2. Its function is as follows. Plays an important role in the de novo pathway and in the salvage pathway of purine nucleotide biosynthesis. Catalyzes the first committed step in the biosynthesis of AMP from IMP. The chain is Adenylosuccinate synthetase from Neurospora crassa (strain ATCC 24698 / 74-OR23-1A / CBS 708.71 / DSM 1257 / FGSC 987).